Here is an 815-residue protein sequence, read N- to C-terminus: Cilia- and flagella-associated protein 251 (815 aa).

10 WD repeats span residues 58–99 (GHTS…PTRT), 103–148 (PHRH…TPPE), 166–205 (PAGDVQHSIRFSPNNPAELISNGRRRVYFWSWAPGSPRFQ), 218–257 (QSVGDFVSSVFVPGTTQALTATTDGDLVVWDEQGIAAQVG), 271–308 (IHNCPITLLATVGDFIVSGGEDGYVRFFDPLLRIVAWF), 379–418 (SLLADVVDLAAHPTRAEFAVLGRDGGLQRWDSIAHCLLGG), 420–460 (AFER…DLYV), 463–502 (NTAAGLVRVAVSNTGKHIAAADENHQLLLYAYLPYKHTMR), 511–553 (SHHG…VAAG), and 573–612 (SFAPPLAYFQAFAADTHLLVSGADGTVASWDINTAPLERS).

In terms of assembly, identified in a spoke-associated complex containing CFAP61, CFAP91 and CFAP251; the complex is associated with the radial spokes in the axoneme. The complex associates with Calmodulin; the association is calcium sensitive.

The protein resides in the cytoplasm. Its subcellular location is the cytoskeleton. The protein localises to the flagellum axoneme. Functionally, as component of a spoke-associated complex, regulates flagellar dynein activity by mediating regulatory signals between the radial spokes and dynein arms. The sequence is that of Cilia- and flagella-associated protein 251 from Chlamydomonas reinhardtii (Chlamydomonas smithii).